A 329-amino-acid polypeptide reads, in one-letter code: Anthranilate phosphoribosyltransferase (329 aa).

5-phospho-alpha-D-ribose 1-diphosphate contacts are provided by residues glycine 78, 81 to 82 (GD), threonine 86, 88 to 91 (NLST), 106 to 114 (KHGNRSASG), and serine 118. Residue glycine 78 participates in anthranilate binding. Serine 90 contacts Mg(2+). Residue asparagine 109 participates in anthranilate binding. Arginine 164 lines the anthranilate pocket. Residues aspartate 221 and glutamate 222 each coordinate Mg(2+).

The protein belongs to the anthranilate phosphoribosyltransferase family. As to quaternary structure, homodimer. It depends on Mg(2+) as a cofactor.

The enzyme catalyses N-(5-phospho-beta-D-ribosyl)anthranilate + diphosphate = 5-phospho-alpha-D-ribose 1-diphosphate + anthranilate. Its pathway is amino-acid biosynthesis; L-tryptophan biosynthesis; L-tryptophan from chorismate: step 2/5. Catalyzes the transfer of the phosphoribosyl group of 5-phosphorylribose-1-pyrophosphate (PRPP) to anthranilate to yield N-(5'-phosphoribosyl)-anthranilate (PRA). This chain is Anthranilate phosphoribosyltransferase, found in Pyrobaculum islandicum (strain DSM 4184 / JCM 9189 / GEO3).